We begin with the raw amino-acid sequence, 289 residues long: MKLLVKAPAKINLSLDVLGKRQDGYHEVKMIMTTIDLADRLELMELAEDRIEILSHNRYVPDDQRNLAYQAAKLLKEKFNVKKGVSITIEKTIPVAAGLAGGSSDAAATLRGLNKLWNLGLTIDQLAELGAEIGSDVSFCVYGGTAIATGRGEQIEHIKTPPSCWVILAKPHIGVSTADVYGNLKLNRVTHPNVDKMVDVINAGDYKGICDTVGNVLEDVTFAMHPEVARIKAQMKRFGADAVLMSGSGPTVFGLVHHDSRMHRIYNGLKGFCEQVYAVRLLGERETLE.

Residue Lys10 is part of the active site. An ATP-binding site is contributed by 94-104 (PVAAGLAGGSS). Residue Asp136 is part of the active site.

Belongs to the GHMP kinase family. IspE subfamily.

The catalysed reaction is 4-CDP-2-C-methyl-D-erythritol + ATP = 4-CDP-2-C-methyl-D-erythritol 2-phosphate + ADP + H(+). It functions in the pathway isoprenoid biosynthesis; isopentenyl diphosphate biosynthesis via DXP pathway; isopentenyl diphosphate from 1-deoxy-D-xylulose 5-phosphate: step 3/6. In terms of biological role, catalyzes the phosphorylation of the position 2 hydroxy group of 4-diphosphocytidyl-2C-methyl-D-erythritol. This Bacillus anthracis (strain CDC 684 / NRRL 3495) protein is 4-diphosphocytidyl-2-C-methyl-D-erythritol kinase.